The chain runs to 118 residues: Nucleoid-associated protein CTN_1899 (118 aa).

The protein belongs to the YbaB/EbfC family. As to quaternary structure, homodimer.

Its subcellular location is the cytoplasm. It is found in the nucleoid. Binds to DNA and alters its conformation. May be involved in regulation of gene expression, nucleoid organization and DNA protection. This is Nucleoid-associated protein CTN_1899 from Thermotoga neapolitana (strain ATCC 49049 / DSM 4359 / NBRC 107923 / NS-E).